The primary structure comprises 240 residues: Cytochrome c-551 (240 aa).

Residues Cys41, Cys44, His45, Cys128, Cys132, and His133 each contribute to the heme c site.

In terms of processing, binds 2 heme c groups per subunit.

The polypeptide is Cytochrome c-551 (Rhodocyclus tenuis (Rhodospirillum tenue)).